The chain runs to 503 residues: Maturase K (503 aa).

The protein belongs to the intron maturase 2 family. MatK subfamily.

The protein resides in the plastid. It localises to the chloroplast. Its function is as follows. Usually encoded in the trnK tRNA gene intron. Probably assists in splicing its own and other chloroplast group II introns. The chain is Maturase K from Liquidambar styraciflua (Sweetgum tree).